A 153-amino-acid polypeptide reads, in one-letter code: Ribosome maturation factor RimP (153 aa).

This sequence belongs to the RimP family.

The protein localises to the cytoplasm. In terms of biological role, required for maturation of 30S ribosomal subunits. The polypeptide is Ribosome maturation factor RimP (Picosynechococcus sp. (strain ATCC 27264 / PCC 7002 / PR-6) (Agmenellum quadruplicatum)).